The following is a 258-amino-acid chain: Ribonuclease HII (258 aa).

The region spanning 71–258 is the RNase H type-2 domain; sequence QLIAGIDEVG…PIKTMVNFKS (188 aa). A divalent metal cation is bound by residues Asp-77, Glu-78, and Asp-169.

It belongs to the RNase HII family. It depends on Mn(2+) as a cofactor. Mg(2+) serves as cofactor.

Its subcellular location is the cytoplasm. It catalyses the reaction Endonucleolytic cleavage to 5'-phosphomonoester.. Its function is as follows. Endonuclease that specifically degrades the RNA of RNA-DNA hybrids. This chain is Ribonuclease HII (rnhB), found in Lactococcus lactis subsp. lactis (strain IL1403) (Streptococcus lactis).